Reading from the N-terminus, the 76-residue chain is ATP synthase subunit c (76 aa).

The next 2 membrane-spanning stretches (helical) occupy residues 8–28 (LLAA…GVGI) and 55–75 (VAFA…LIFV).

The protein belongs to the ATPase C chain family. F-type ATPases have 2 components, F(1) - the catalytic core - and F(0) - the membrane proton channel. F(1) has five subunits: alpha(3), beta(3), gamma(1), delta(1), epsilon(1). F(0) has three main subunits: a(1), b(2) and c(10-14). The alpha and beta chains form an alternating ring which encloses part of the gamma chain. F(1) is attached to F(0) by a central stalk formed by the gamma and epsilon chains, while a peripheral stalk is formed by the delta and b chains.

The protein resides in the cell membrane. Its function is as follows. F(1)F(0) ATP synthase produces ATP from ADP in the presence of a proton or sodium gradient. F-type ATPases consist of two structural domains, F(1) containing the extramembraneous catalytic core and F(0) containing the membrane proton channel, linked together by a central stalk and a peripheral stalk. During catalysis, ATP synthesis in the catalytic domain of F(1) is coupled via a rotary mechanism of the central stalk subunits to proton translocation. In terms of biological role, key component of the F(0) channel; it plays a direct role in translocation across the membrane. A homomeric c-ring of between 10-14 subunits forms the central stalk rotor element with the F(1) delta and epsilon subunits. The protein is ATP synthase subunit c of Dehalococcoides mccartyi (strain ATCC BAA-2266 / KCTC 15142 / 195) (Dehalococcoides ethenogenes (strain 195)).